A 427-amino-acid chain; its full sequence is Glutamate-1-semialdehyde 2,1-aminomutase 1 (427 aa).

Position 267 is an N6-(pyridoxal phosphate)lysine (K267).

Belongs to the class-III pyridoxal-phosphate-dependent aminotransferase family. HemL subfamily. In terms of assembly, homodimer. Requires pyridoxal 5'-phosphate as cofactor.

Its subcellular location is the cytoplasm. The enzyme catalyses (S)-4-amino-5-oxopentanoate = 5-aminolevulinate. It functions in the pathway porphyrin-containing compound metabolism; protoporphyrin-IX biosynthesis; 5-aminolevulinate from L-glutamyl-tRNA(Glu): step 2/2. The sequence is that of Glutamate-1-semialdehyde 2,1-aminomutase 1 from Staphylococcus epidermidis (strain ATCC 35984 / DSM 28319 / BCRC 17069 / CCUG 31568 / BM 3577 / RP62A).